Here is a 152-residue protein sequence, read N- to C-terminus: Aspartate carbamoyltransferase regulatory chain (152 aa).

Zn(2+) contacts are provided by Cys-107, Cys-112, Cys-136, and Cys-139.

Belongs to the PyrI family. As to quaternary structure, contains catalytic and regulatory chains. The cofactor is Zn(2+).

Its function is as follows. Involved in allosteric regulation of aspartate carbamoyltransferase. The sequence is that of Aspartate carbamoyltransferase regulatory chain from Chromobacterium violaceum (strain ATCC 12472 / DSM 30191 / JCM 1249 / CCUG 213 / NBRC 12614 / NCIMB 9131 / NCTC 9757 / MK).